Reading from the N-terminus, the 399-residue chain is MKPNRPLIVILSTVALDAVGIGLIMPVLPGLLRDLVHSNDVTAHYGILLALYALMQFACAPVLGALSDRFGRRPVLLVSLAGAAVDYAIMATAPFLWVLYIGRIVAGITGATGAVAGAYIADITDGDERARHFGFMSACFGFGMVAGPVLGGLMGGFSPHAPFFAAAALNGLNFLTGCFLLPESHKGERRPLRREALNPLASFRWARGMTVVAALMAVFFIMQLVGQVPAALWVIFGEDRFHWDATTIGISLAAFGILHSLAQAMITGPVAARLGERRALMLGMIADGTGYILLAFATRGWMAFPIMVLLASGGIGMPALQAMLSRQVDEERQGQLQGSLAALTSLTSIVGPLLFTAIYAASITTWNGWAWIAGAALYLLCLPALRRGLWSGAGQRADR.

12 consecutive transmembrane segments (helical) span residues 7 to 29 (LIVILSTVALDAVGIGLIMPVLP), 44 to 66 (HYGILLALYALMQFACAPVLGAL), 73 to 95 (RPVLLVSLAGAAVDYAIMATAPF), 99 to 121 (LYIGRIVAGITGATGAVAGAYIA), 133 to 155 (FGFMSACFGFGMVAGPVLGGLMG), 160 to 182 (HAPFFAAAALNGLNFLTGCFLLP), 203 to 225 (FRWARGMTVVAALMAVFFIMQLV), 245 to 267 (ATTIGISLAAFGILHSLAQAMIT), 279 to 298 (ALMLGMIADGTGYILLAFAT), 302 to 324 (MAFPIMVLLASGGIGMPALQAML), 336 to 358 (LQGSLAALTSLTSIVGPLLFTAI), and 368 to 390 (GWAWIAGAALYLLCLPALRRGLW).

This sequence belongs to the major facilitator superfamily. TCR/Tet family.

The protein resides in the cell inner membrane. Its function is as follows. Resistance to tetracycline by an active tetracycline efflux. This is an energy-dependent process that decreases the accumulation of the antibiotic in whole cells. This protein functions as a metal-tetracycline/H(+) antiporter. The polypeptide is Tetracycline resistance protein, class A (tetA) (Escherichia coli).